The following is a 509-amino-acid chain: Histidine--tRNA ligase, cytoplasmic (509 aa).

N-acetylalanine is present on Ala-2. The WHEP-TRS domain occupies 3–59; the sequence is DRAALEDLVRVQGERVRGLKQQKASAEQIEEEVAKLLKLKAQLGPDEGKPKFVLKTP. Phosphoserine is present on Ser-66. Residues 130 to 132, Arg-157, Gln-173, Asp-177, Arg-326, and 330 to 331 contribute to the L-histidine site; these read DLT and YY. Position 356 is a phosphoserine (Ser-356).

Belongs to the class-II aminoacyl-tRNA synthetase family. Homodimer.

The protein localises to the cytoplasm. The enzyme catalyses tRNA(His) + L-histidine + ATP = L-histidyl-tRNA(His) + AMP + diphosphate + H(+). Functionally, catalyzes the ATP-dependent ligation of histidine to the 3'-end of its cognate tRNA, via the formation of an aminoacyl-adenylate intermediate (His-AMP). Plays a role in axon guidance. The chain is Histidine--tRNA ligase, cytoplasmic (HARS1) from Bos taurus (Bovine).